Here is a 390-residue protein sequence, read N- to C-terminus: 2-oxoisovalerate dehydrogenase subunit beta, mitochondrial (390 aa).

Residues M1–R48 constitute a mitochondrion transit peptide. Residue Y150 coordinates thiamine diphosphate. K(+)-binding residues include G176, L178, T179, C226, and D229. N6-acetyllysine is present on K230. Position 231 (N231) interacts with K(+). K239 carries the N6-acetyllysine modification.

In terms of assembly, heterotetramer of 2 alpha/BCKDHA and 2 beta chains/BCKDHB that forms the branched-chain alpha-keto acid decarboxylase (E1) component of the BCKD complex. The branched-chain alpha-ketoacid dehydrogenase is a large complex composed of three major building blocks E1, E2 and E3. It is organized around E2, a 24-meric cubic core composed of DBT, to which are associated 6 to 12 copies of E1, and approximately 6 copies of the dehydrogenase E3, a DLD dimer. It depends on thiamine diphosphate as a cofactor.

Its subcellular location is the mitochondrion matrix. The catalysed reaction is N(6)-[(R)-lipoyl]-L-lysyl-[protein] + 3-methyl-2-oxobutanoate + H(+) = N(6)-[(R)-S(8)-2-methylpropanoyldihydrolipoyl]-L-lysyl-[protein] + CO2. In terms of biological role, together with BCKDHA forms the heterotetrameric E1 subunit of the mitochondrial branched-chain alpha-ketoacid dehydrogenase (BCKD) complex. The BCKD complex catalyzes the multi-step oxidative decarboxylation of alpha-ketoacids derived from the branched-chain amino-acids valine, leucine and isoleucine producing CO2 and acyl-CoA which is subsequently utilized to produce energy. The E1 subunit catalyzes the first step with the decarboxylation of the alpha-ketoacid forming an enzyme-product intermediate. A reductive acylation mediated by the lipoylamide cofactor of E2 extracts the acyl group from the E1 active site for the next step of the reaction. The chain is 2-oxoisovalerate dehydrogenase subunit beta, mitochondrial from Mus musculus (Mouse).